Reading from the N-terminus, the 349-residue chain is tRNA pseudouridine synthase D (349 aa).

Phe-27 contributes to the substrate binding site. The active-site Nucleophile is Asp-80. Asn-129 contacts substrate. Residues 155–303 (GVPNYFGAQR…VEAARRAMLL (149 aa)) form the TRUD domain. Phe-329 provides a ligand contact to substrate.

This sequence belongs to the pseudouridine synthase TruD family.

It carries out the reaction uridine(13) in tRNA = pseudouridine(13) in tRNA. Functionally, responsible for synthesis of pseudouridine from uracil-13 in transfer RNAs. This is tRNA pseudouridine synthase D from Klebsiella pneumoniae subsp. pneumoniae (strain ATCC 700721 / MGH 78578).